The chain runs to 434 residues: Histidinol dehydrogenase (434 aa).

NAD(+)-binding residues include tyrosine 130, glutamine 191, and asparagine 214. Substrate-binding residues include serine 237, glutamine 259, and histidine 262. Zn(2+) contacts are provided by glutamine 259 and histidine 262. Active-site proton acceptor residues include glutamate 328 and histidine 329. Histidine 329, aspartate 362, glutamate 416, and histidine 421 together coordinate substrate. Aspartate 362 contacts Zn(2+). Residue histidine 421 participates in Zn(2+) binding.

It belongs to the histidinol dehydrogenase family. The cofactor is Zn(2+).

It catalyses the reaction L-histidinol + 2 NAD(+) + H2O = L-histidine + 2 NADH + 3 H(+). The protein operates within amino-acid biosynthesis; L-histidine biosynthesis; L-histidine from 5-phospho-alpha-D-ribose 1-diphosphate: step 9/9. Catalyzes the sequential NAD-dependent oxidations of L-histidinol to L-histidinaldehyde and then to L-histidine. The protein is Histidinol dehydrogenase of Rhodospirillum rubrum (strain ATCC 11170 / ATH 1.1.1 / DSM 467 / LMG 4362 / NCIMB 8255 / S1).